Consider the following 439-residue polypeptide: High-energy light unresponsive protein 1 (439 aa).

Over 1–67 (MPPPSSHSNI…LGLNQSIRPN (67 aa)) the chain is Cytoplasmic. A helical transmembrane segment spans residues 68–88 (NSLLFRIYSWLVFCLLLFTTL). Over 89–114 (RKFNQVGVRPNGTRENLQEFFANPRS) the chain is Extracellular. Residues 115–135 (MITLCNALIMLSGLLASLQLY) traverse the membrane as a helical segment. Over 136–164 (TLGAKRLKPLKILCQFSLNVRTKQAERRQ) the chain is Cytoplasmic. A helical membrane pass occupies residues 165–185 (FMINTFLAVFSGLLALTMAAT). Residues 186-211 (YAMSKWGYILYIVGTPNLDTETIFCV) lie on the Extracellular side of the membrane. A helical membrane pass occupies residues 212–232 (LLDSYALFVSRAAISALAILF). Over 233–290 (YQHCSVIRRSIKHLINEMVPAEQDECPLPESSLQKIHDCQISYQRIFNGKAVIEEYYS) the chain is Cytoplasmic. Residues 291–311 (FVLFYSYGVCIPIFCFLMFVG) form a helical membrane-spanning segment. Residues 312-324 (MSAQSICWSEVVS) are Extracellular-facing. A helical transmembrane segment spans residues 325–345 (IVIWIVNAILVLLLFSLPAFM). Topologically, residues 346–402 (INEDGDRLVASSFRMYHETFHEERDLTVLSQMTFFTFQIHSTKLTLSACNYFYMDRS) are cytoplasmic. The chain crosses the membrane as a helical span at residues 403–423 (ILLSLFSAILTYFLILWEFDI). The Extracellular segment spans residues 424–439 (KNNQSLQNIANHTIHT).

The protein belongs to the insect chemoreceptor superfamily. Gustatory receptor (GR) family. As to expression, expressed in the AVG and PVT neurons of the tail.

It localises to the cell membrane. Functionally, photoreceptor for short wavelength (UV) light that mediates UV-light-induced avoidance behavior. Directly senses and absorbs both UV-A and UV-B light with very high efficiency. Absorption of UV-B but not UV-A light shows resistance to photobleaching. In contrast to other photoreceptors, does not use a prosthetic chromophore to capture photons and only depends on its protein conformation. Might have a role in response to white light exposure. The polypeptide is High-energy light unresponsive protein 1 (Caenorhabditis elegans).